Here is a 216-residue protein sequence, read N- to C-terminus: Dual specificity protein phosphatase VP2 (216 aa).

The tract at residues methionine 1 to glycine 50 is disordered. Positions glycine 21 to glutamine 32 are enriched in low complexity. Residue cysteine 95 is the Phosphocysteine intermediate of the active site. Positions aspartate 165–aspartate 187 are disordered. Residues proline 172–aspartate 187 are compositionally biased toward acidic residues.

Belongs to the gyrovirus protein VP2 family.

The enzyme catalyses O-phospho-L-tyrosyl-[protein] + H2O = L-tyrosyl-[protein] + phosphate. It catalyses the reaction O-phospho-L-seryl-[protein] + H2O = L-seryl-[protein] + phosphate. The catalysed reaction is O-phospho-L-threonyl-[protein] + H2O = L-threonyl-[protein] + phosphate. May act as a scaffold protein in virion assembly. May also play a role in intracellular signaling during viral replication. The chain is Dual specificity protein phosphatase VP2 (VP2) from Gallus gallus (Chicken).